A 198-amino-acid chain; its full sequence is Glycerol-3-phosphate acyltransferase (198 aa).

5 helical membrane-spanning segments follow: residues 2 to 22 (IIDL…FGVL), 53 to 73 (LGFI…VIAT), 79 to 99 (PFMY…SCFL), 113 to 133 (VLIP…TFFI), and 152 to 172 (IILF…IMAL).

Belongs to the PlsY family. As to quaternary structure, probably interacts with PlsX.

It is found in the cell membrane. It carries out the reaction an acyl phosphate + sn-glycerol 3-phosphate = a 1-acyl-sn-glycero-3-phosphate + phosphate. It participates in lipid metabolism; phospholipid metabolism. Functionally, catalyzes the transfer of an acyl group from acyl-phosphate (acyl-PO(4)) to glycerol-3-phosphate (G3P) to form lysophosphatidic acid (LPA). This enzyme utilizes acyl-phosphate as fatty acyl donor, but not acyl-CoA or acyl-ACP. This chain is Glycerol-3-phosphate acyltransferase, found in Lawsonia intracellularis (strain PHE/MN1-00).